The sequence spans 308 residues: Eukaryotic translation initiation factor 3 subunit G (308 aa).

Residues M1–E23 form a disordered region. The region spanning P225–P303 is the RRM domain.

The protein belongs to the eIF-3 subunit G family. As to quaternary structure, component of the eukaryotic translation initiation factor 3 (eIF-3) complex.

The protein localises to the cytoplasm. Its function is as follows. RNA-binding component of the eukaryotic translation initiation factor 3 (eIF-3) complex, which is involved in protein synthesis of a specialized repertoire of mRNAs and, together with other initiation factors, stimulates binding of mRNA and methionyl-tRNAi to the 40S ribosome. The eIF-3 complex specifically targets and initiates translation of a subset of mRNAs involved in cell proliferation. This subunit can bind 18S rRNA. The chain is Eukaryotic translation initiation factor 3 subunit G from Mycosarcoma maydis (Corn smut fungus).